We begin with the raw amino-acid sequence, 102 residues long: Thioredoxin (102 aa).

The Thioredoxin domain occupies 2–102 (VTEIRSLKQL…KTKIIDLFNN (101 aa)). The cysteines at positions 30 and 33 are disulfide-linked.

The protein belongs to the thioredoxin family.

Functionally, participates in various redox reactions through the reversible oxidation of its active center dithiol to a disulfide and catalyzes dithiol-disulfide exchange reactions. This Mycoplasma genitalium (strain ATCC 33530 / DSM 19775 / NCTC 10195 / G37) (Mycoplasmoides genitalium) protein is Thioredoxin (trxA).